Here is a 312-residue protein sequence, read N- to C-terminus: Porphobilinogen deaminase (312 aa).

Position 235 is an S-(dipyrrolylmethanemethyl)cysteine (Cys235).

The protein belongs to the HMBS family. In terms of assembly, monomer. It depends on dipyrromethane as a cofactor.

It catalyses the reaction 4 porphobilinogen + H2O = hydroxymethylbilane + 4 NH4(+). Its pathway is porphyrin-containing compound metabolism; protoporphyrin-IX biosynthesis; coproporphyrinogen-III from 5-aminolevulinate: step 2/4. Tetrapolymerization of the monopyrrole PBG into the hydroxymethylbilane pre-uroporphyrinogen in several discrete steps. The chain is Porphobilinogen deaminase from Mycolicibacterium gilvum (strain PYR-GCK) (Mycobacterium gilvum (strain PYR-GCK)).